We begin with the raw amino-acid sequence, 279 residues long: Formamidopyrimidine-DNA glycosylase (279 aa).

The Schiff-base intermediate with DNA role is filled by P2. E3 serves as the catalytic Proton donor. K57 (proton donor; for beta-elimination activity) is an active-site residue. DNA-binding residues include H90, R109, and R151. The segment at 236–270 (FVYGRTGQPCRVCQTPIAVLRLGQRSTFYCPACQQ) adopts an FPG-type zinc-finger fold. The active-site Proton donor; for delta-elimination activity is R260.

Belongs to the FPG family. Monomer. Zn(2+) is required as a cofactor.

The enzyme catalyses Hydrolysis of DNA containing ring-opened 7-methylguanine residues, releasing 2,6-diamino-4-hydroxy-5-(N-methyl)formamidopyrimidine.. The catalysed reaction is 2'-deoxyribonucleotide-(2'-deoxyribose 5'-phosphate)-2'-deoxyribonucleotide-DNA = a 3'-end 2'-deoxyribonucleotide-(2,3-dehydro-2,3-deoxyribose 5'-phosphate)-DNA + a 5'-end 5'-phospho-2'-deoxyribonucleoside-DNA + H(+). Its function is as follows. Involved in base excision repair of DNA damaged by oxidation or by mutagenic agents. Acts as a DNA glycosylase that recognizes and removes damaged bases. Has a preference for oxidized purines, such as 7,8-dihydro-8-oxoguanine (8-oxoG). Has AP (apurinic/apyrimidinic) lyase activity and introduces nicks in the DNA strand. Cleaves the DNA backbone by beta-delta elimination to generate a single-strand break at the site of the removed base with both 3'- and 5'-phosphates. This Methylobacillus flagellatus (strain ATCC 51484 / DSM 6875 / VKM B-1610 / KT) protein is Formamidopyrimidine-DNA glycosylase.